Reading from the N-terminus, the 120-residue chain is ATP synthase subunit a (120 aa).

The next 4 helical transmembrane spans lie at 2–22 (FFYSLFKGTYNFIYVTIYSYL), 29–49 (FFPFFFYLFLFICLSNLVGIV), 59–79 (LNITFSLSFLVWWATCLLGFY), and 94–116 (IPFVLVPFWALIEVISFIFRSVG).

The protein belongs to the ATPase A chain family. In terms of assembly, F-type ATPases have 2 components, CF(1) - the catalytic core - and CF(0) - the membrane proton channel. CF(1) has five subunits: alpha(3), beta(3), gamma(1), delta(1), epsilon(1). CF(0) has three main subunits: a, b and c.

It localises to the mitochondrion inner membrane. Mitochondrial membrane ATP synthase (F(1)F(0) ATP synthase or Complex V) produces ATP from ADP in the presence of a proton gradient across the membrane which is generated by electron transport complexes of the respiratory chain. F-type ATPases consist of two structural domains, F(1) - containing the extramembraneous catalytic core and F(0) - containing the membrane proton channel, linked together by a central stalk and a peripheral stalk. During catalysis, ATP synthesis in the catalytic domain of F(1) is coupled via a rotary mechanism of the central stalk subunits to proton translocation. Key component of the proton channel; it may play a direct role in the translocation of protons across the membrane. In Naegleria fowleri (Brain eating amoeba), this protein is ATP synthase subunit a (ATP6).